A 335-amino-acid chain; its full sequence is Cut9-interacting protein scn1 (335 aa).

It belongs to the metallo-dependent hydrolases superfamily.

Its function is as follows. Interacts with cut9. This chain is Cut9-interacting protein scn1 (scn1), found in Schizosaccharomyces pombe (strain 972 / ATCC 24843) (Fission yeast).